We begin with the raw amino-acid sequence, 855 residues long: Receptor-like protein kinase THESEUS 1 (855 aa).

The first 22 residues, 1–22 (MVFTKSLLVLLWFLSCYTTTTS), serve as a signal peptide directing secretion. At 23 to 415 (SALFNPPDNY…GGSGSKSKKK (393 aa)) the chain is on the extracellular side. N-linked (GlcNAc...) asparagine glycosylation is found at Asn-41, Asn-64, Asn-75, Asn-114, Asn-118, Asn-136, Asn-143, Asn-154, Asn-168, Asn-225, Asn-242, Asn-288, Asn-353, and Asn-376. A helical membrane pass occupies residues 416 to 436 (AVIIGSLVGAVTLILLIAVCC). Residues 437–855 (YCCLVASRKQ…FSQLVHPRGR (419 aa)) lie on the Cytoplasmic side of the membrane. A Protein kinase domain is found at 510-783 (FDESSLLGVG…GDVLWNLEYA (274 aa)). Residues 516-524 (LGVGGFGRV) and Lys-538 each bind ATP. Asp-634 acts as the Proton acceptor in catalysis. Residues 822–855 (IDRGGVNSGTGTDDDAEDATTSAVFSQLVHPRGR) are disordered.

This sequence belongs to the protein kinase superfamily. Ser/Thr protein kinase family. In terms of processing, autophosphorylated. Expressed in most vegetative tissues, including leaves, stems and roots, primarily in expanding cells and vascular tissue.

The protein resides in the cell membrane. Functionally, receptor-like protein kinase required for cell elongation during vegetative growth, mostly in a brassinosteroid-(BR-) independent manner. Mediates the response of growing plant cells to the perturbation of cellulose synthesis and may act as a cell-wall-integrity sensor. Controls ectopic-lignin accumulation in cellulose-deficient mutant backgrounds. In Arabidopsis thaliana (Mouse-ear cress), this protein is Receptor-like protein kinase THESEUS 1 (THE1).